A 131-amino-acid polypeptide reads, in one-letter code: D-ribose pyranase (131 aa).

The Proton donor role is filled by histidine 20. Substrate-binding positions include aspartate 28, histidine 98, and 120–122 (YAN).

It belongs to the RbsD / FucU family. RbsD subfamily. As to quaternary structure, homodecamer.

Its subcellular location is the cytoplasm. It catalyses the reaction beta-D-ribopyranose = beta-D-ribofuranose. It functions in the pathway carbohydrate metabolism; D-ribose degradation; D-ribose 5-phosphate from beta-D-ribopyranose: step 1/2. Functionally, catalyzes the interconversion of beta-pyran and beta-furan forms of D-ribose. The chain is D-ribose pyranase from Bacillus thuringiensis (strain Al Hakam).